The following is a 377-amino-acid chain: Erythronate-4-phosphate dehydrogenase (377 aa).

Substrate is bound by residues Ser59 and Thr81. Asp162 serves as a coordination point for NAD(+). Arg237 is an active-site residue. NAD(+) is bound at residue Asp260. Glu265 is a catalytic residue. The active-site Proton donor is the His282. Gly285 contacts NAD(+). Residue Tyr286 coordinates substrate.

It belongs to the D-isomer specific 2-hydroxyacid dehydrogenase family. PdxB subfamily. Homodimer.

Its subcellular location is the cytoplasm. It catalyses the reaction 4-phospho-D-erythronate + NAD(+) = (R)-3-hydroxy-2-oxo-4-phosphooxybutanoate + NADH + H(+). It functions in the pathway cofactor biosynthesis; pyridoxine 5'-phosphate biosynthesis; pyridoxine 5'-phosphate from D-erythrose 4-phosphate: step 2/5. Its function is as follows. Catalyzes the oxidation of erythronate-4-phosphate to 3-hydroxy-2-oxo-4-phosphonooxybutanoate. This is Erythronate-4-phosphate dehydrogenase from Psychrobacter arcticus (strain DSM 17307 / VKM B-2377 / 273-4).